A 472-amino-acid polypeptide reads, in one-letter code: NADH-quinone oxidoreductase subunit N 2 (472 aa).

A run of 13 helical transmembrane segments spans residues tryptophan 3–serine 23, histidine 34–alanine 54, leucine 67–cysteine 87, phenylalanine 106–isoleucine 126, phenylalanine 156–alanine 176, valine 198–phenylalanine 218, valine 233–isoleucine 253, leucine 263–isoleucine 283, leucine 291–asparagine 311, alanine 317–valine 337, isoleucine 360–glycine 380, threonine 398–isoleucine 418, and leucine 441–isoleucine 461.

Belongs to the complex I subunit 2 family. In terms of assembly, NDH-1 is composed of 14 different subunits. Subunits NuoA, H, J, K, L, M, N constitute the membrane sector of the complex.

It localises to the cell inner membrane. The enzyme catalyses a quinone + NADH + 5 H(+)(in) = a quinol + NAD(+) + 4 H(+)(out). Functionally, NDH-1 shuttles electrons from NADH, via FMN and iron-sulfur (Fe-S) centers, to quinones in the respiratory chain. The immediate electron acceptor for the enzyme in this species is believed to be ubiquinone. Couples the redox reaction to proton translocation (for every two electrons transferred, four hydrogen ions are translocated across the cytoplasmic membrane), and thus conserves the redox energy in a proton gradient. This chain is NADH-quinone oxidoreductase subunit N 2, found in Syntrophobacter fumaroxidans (strain DSM 10017 / MPOB).